The primary structure comprises 335 residues: Fructose-1,6-bisphosphatase class 1 (335 aa).

The Mg(2+) site is built by Glu-92, Asp-115, Leu-117, and Asp-118. Residues 118–121, Asn-211, Tyr-244, 262–264, and Lys-274 each bind substrate; these read DGSS and YLY. Glu-280 contributes to the Mg(2+) binding site.

Belongs to the FBPase class 1 family. Homotetramer. Mg(2+) serves as cofactor.

The protein resides in the cytoplasm. The catalysed reaction is beta-D-fructose 1,6-bisphosphate + H2O = beta-D-fructose 6-phosphate + phosphate. Its pathway is carbohydrate biosynthesis; gluconeogenesis. The sequence is that of Fructose-1,6-bisphosphatase class 1 from Teredinibacter turnerae (strain ATCC 39867 / T7901).